Reading from the N-terminus, the 125-residue chain is Large ribosomal subunit protein bL12 (125 aa).

This sequence belongs to the bacterial ribosomal protein bL12 family. In terms of assembly, homodimer. Part of the ribosomal stalk of the 50S ribosomal subunit. Forms a multimeric L10(L12)X complex, where L10 forms an elongated spine to which 2 to 4 L12 dimers bind in a sequential fashion. Binds GTP-bound translation factors.

Forms part of the ribosomal stalk which helps the ribosome interact with GTP-bound translation factors. Is thus essential for accurate translation. The polypeptide is Large ribosomal subunit protein bL12 (Bradyrhizobium sp. (strain ORS 278)).